The following is a 598-amino-acid chain: MAESMKGLHRTHRCTELSNSNVGEIVTVMGWVQKSRNKGGIIFVDLRDRSGLLQIIFEEGDIGTEMFEKASKLRSEFVVAVVGKVETRSGAVNENLLTGTIEVRATELRILSESETPPFPIEEGSKTKEELRLKYRYLDLRRPDLVRNLMLRSKVATLTRQFLSDEGFLEIETPMLTKSTPEGARDYLVPSRVHPGNFYALPQSPQIFKQLLMVSGYDRYFQIVKCFRDEDLRADRQPEFTQIDMELSFVDVDDVISVNERLLQKMFKESIGIDVSLPIQRMTWREAMDRYGSDKPDTRFGMELKNVSELVKDCGFAVFTGALENGGSVRGINANGQGEMPRKKIDALIEFAKGYGAKGLAYLSINEDGTYKSSFSKFMTEEELSALVAAMEAKPGDLLFFAADKDKVVFDVLGNLRLEIARNLELLDKNTYNFLWVTEFPLLEYSEEEGRYTAMHHPFTMPMDEDLPLLETDPGKVRAKAYDIVLNGTEVGGGSVRIFQNNVQEKMFEVLGFTKEEAYERFGFLLNAFKYGVPPHAGLAYGLDRLVMLMAKEDSIRDVIAFPKVKDASCLLTDAPNVVDDKQLEELSIALAKKATEE.

L-aspartate is bound at residue Glu182. The interval 206-209 is aspartate; that stretch reads QIFK. Arg228 contacts L-aspartate. ATP-binding positions include 228 to 230 and Gln237; that span reads RDE. His456 provides a ligand contact to L-aspartate. Glu490 serves as a coordination point for ATP. An L-aspartate-binding site is contributed by Arg497. 542-545 contributes to the ATP binding site; sequence GLDR.

It belongs to the class-II aminoacyl-tRNA synthetase family. Type 1 subfamily. In terms of assembly, homodimer.

It is found in the cytoplasm. It carries out the reaction tRNA(Asx) + L-aspartate + ATP = L-aspartyl-tRNA(Asx) + AMP + diphosphate. Aspartyl-tRNA synthetase with relaxed tRNA specificity since it is able to aspartylate not only its cognate tRNA(Asp) but also tRNA(Asn). Reaction proceeds in two steps: L-aspartate is first activated by ATP to form Asp-AMP and then transferred to the acceptor end of tRNA(Asp/Asn). This chain is Aspartate--tRNA(Asp/Asn) ligase, found in Lachnoclostridium phytofermentans (strain ATCC 700394 / DSM 18823 / ISDg) (Clostridium phytofermentans).